Here is a 282-residue protein sequence, read N- to C-terminus: NAC domain-containing protein 1 (282 aa).

The NAC domain occupies 9–161 (LPPGFRFHPT…DWVLCRIYKK (153 aa)). A DNA-binding region spans residues 106–167 (VGIKKALVFY…IYKKKNLGRT (62 aa)). Residues 161–188 (KKNLGRTIEMMKVEEEELEAQNVSTTNN) are a coiled coil.

In terms of tissue distribution, expressed in roots, stem, flowers, and leaves.

Its subcellular location is the nucleus. Transcription factor that binds DNA motifs 5'-CGT[AG](5N)NACG[ACT][AC][AT][ACG][ACT]-3' and 5'-CACG[ACT][AC][AT][AGT][CT]-3' in target genes promoters. Promotes leaf senescence and reduces fruit yield and sugar content, probably by establishing abscisic acid (ABA) homeostasis. This Solanum lycopersicum (Tomato) protein is NAC domain-containing protein 1.